A 272-amino-acid chain; its full sequence is Cyclase-like protein 2 (272 aa).

Positions 1 to 17 are cleaved as a signal peptide; the sequence is MAHLATVVLLLVAAARQ.

It belongs to the Cyclase 1 superfamily. Highly expressed in leaf sheaths and flag leaves. Expressed in roots, stems, leaf collars, glumes, young panicles and pistils.

It is found in the secreted. The protein localises to the extracellular space. The protein resides in the extracellular matrix. Functionally, may be involved in response to stresses. This Oryza sativa subsp. japonica (Rice) protein is Cyclase-like protein 2.